The sequence spans 1340 residues: Early transcription factor large subunit homolog (1340 aa).

It belongs to the asfivirus G1340L family.

It is found in the virion. In terms of biological role, putative initation factor. The chain is Early transcription factor large subunit homolog from African swine fever virus (strain Badajoz 1971 Vero-adapted) (Ba71V).